A 189-amino-acid chain; its full sequence is MDTEYEQVNKPWNELYKETMLGNKLMVNVGMEDQEVPLLPSNFLTKVRVGLSGGYITMRRFRIKIIPLVSRKAGVSGKLYLRDISDTKGQKLHCTESLDLGREIRLTMQHLDFSVSTRSGVPIVFGFEELVSPFLEGRELFSISVKWQFGLSKNCYSLPQSKWKVMYLEDALKVLKLSKKKASKTDSSV.

The protein belongs to the tombusvirus/aureusvirus movement protein p22 family. Interacts with host protein HFI22. Phosphorylated.

The protein localises to the host membrane. Its function is as follows. Transports viral genome to neighboring plant cells directly through plasmosdesmata, without any budding. The movement protein allows efficient cell to cell propagation, by bypassing the host cell wall barrier. This chain is Movement protein, found in Tomato bushy stunt virus (strain BS-3) (TBSV).